A 133-amino-acid chain; its full sequence is Large-conductance mechanosensitive channel (133 aa).

2 consecutive transmembrane segments (helical) span residues 10–30 (FAVK…GAFG) and 76–96 (GAFI…FSMV).

This sequence belongs to the MscL family. Homopentamer.

The protein localises to the cell inner membrane. Channel that opens in response to stretch forces in the membrane lipid bilayer. May participate in the regulation of osmotic pressure changes within the cell. This Haemophilus ducreyi (strain 35000HP / ATCC 700724) protein is Large-conductance mechanosensitive channel.